The primary structure comprises 185 residues: ATP synthase subunit b 2 (185 aa).

A disordered region spans residues 1 to 23 (MAEGHGDAKGATAHTAADGGHKA). Low complexity predominate over residues 9-18 (KGATAHTAAD). Residues 37 to 57 (LVSLTIAFVALYLIVSKIILP) form a helical membrane-spanning segment.

Belongs to the ATPase B chain family. F-type ATPases have 2 components, F(1) - the catalytic core - and F(0) - the membrane proton channel. F(1) has five subunits: alpha(3), beta(3), gamma(1), delta(1), epsilon(1). F(0) has three main subunits: a(1), b(2) and c(10-14). The alpha and beta chains form an alternating ring which encloses part of the gamma chain. F(1) is attached to F(0) by a central stalk formed by the gamma and epsilon chains, while a peripheral stalk is formed by the delta and b chains.

Its subcellular location is the cell inner membrane. Functionally, f(1)F(0) ATP synthase produces ATP from ADP in the presence of a proton or sodium gradient. F-type ATPases consist of two structural domains, F(1) containing the extramembraneous catalytic core and F(0) containing the membrane proton channel, linked together by a central stalk and a peripheral stalk. During catalysis, ATP synthesis in the catalytic domain of F(1) is coupled via a rotary mechanism of the central stalk subunits to proton translocation. In terms of biological role, component of the F(0) channel, it forms part of the peripheral stalk, linking F(1) to F(0). The b'-subunit is a diverged and duplicated form of b found in plants and photosynthetic bacteria. This Rhodopseudomonas palustris (strain BisB5) protein is ATP synthase subunit b 2 (atpF2).